The sequence spans 88 residues: MAVHIRLARAGTKKTPFYRIVVADQRSPRGGRFIERLGTYDPRRTEIRLDVPRVRHWISNGAQPTHTVALLLKHPGLAQAAAPADAAK.

This sequence belongs to the bacterial ribosomal protein bS16 family.

The chain is Small ribosomal subunit protein bS16 from Sorangium cellulosum (strain So ce56) (Polyangium cellulosum (strain So ce56)).